The chain runs to 91 residues: Small ribosomal subunit protein uS19 (91 aa).

This sequence belongs to the universal ribosomal protein uS19 family.

Its function is as follows. Protein S19 forms a complex with S13 that binds strongly to the 16S ribosomal RNA. In Exiguobacterium sp. (strain ATCC BAA-1283 / AT1b), this protein is Small ribosomal subunit protein uS19.